We begin with the raw amino-acid sequence, 129 residues long: MESSRLRLLPLLGAALLLLLPLLGARAQEDAELQPRALDIYSAVDDASHEKELPRRQLRAPGAMLQIEALQEVLKKLKSKRIPIYEKKYGQVPMCDAGEQCAVRKGARIGKLCDCPRGTSCNSFLLKCL.

The first 27 residues, M1–A27, serve as a signal peptide directing secretion. A Phosphotyrosine modification is found at Y41. Position 48 is a phosphoserine (S48). 3 disulfides stabilise this stretch: C95-C113, C101-C121, and C115-C128.

The protein belongs to the CART family.

The protein localises to the secreted. Functionally, satiety factor closely associated with the actions of leptin and neuropeptide y; this anorectic peptide inhibits both normal and starvation-induced feeding and completely blocks the feeding response induced by neuropeptide Y and regulated by leptin in the hypothalamus. The sequence is that of Cocaine- and amphetamine-regulated transcript protein (Cartpt) from Mus musculus (Mouse).